Consider the following 341-residue polypeptide: Heterogeneous nuclear ribonucleoproteins A2/B1 (341 aa).

RRM domains follow at residues 9-92 and 100-179; these read RKLF…ESGK and KKLF…LSRQ. Residue K10 forms a Glycyl lysine isopeptide (Lys-Gly) (interchain with G-Cter in SUMO2) linkage. S17 bears the Phosphoserine mark. The residue at position 26 (R26) is an Omega-N-methylarginine. A Phosphoserine modification is found at S73. Position 92 is an N6,N6-dimethyllysine; alternate (K92). K92 participates in a covalent cross-link: Glycyl lysine isopeptide (Lys-Gly) (interchain with G-Cter in SUMO2); alternate. Residues K100, K108, and K125 each participate in a glycyl lysine isopeptide (Lys-Gly) (interchain with G-Cter in SUMO2) cross-link. T128 carries the phosphothreonine modification. S137 carries the post-translational modification Phosphoserine. Residue K140 forms a Glycyl lysine isopeptide (Lys-Gly) (interchain with G-Cter in SUMO2) linkage. A Phosphothreonine modification is found at T147. Glycyl lysine isopeptide (Lys-Gly) (interchain with G-Cter in SUMO2); alternate cross-links involve residues K156 and K161. N6-acetyllysine; alternate is present on residues K156 and K161. At T164 the chain carries Phosphothreonine. K174 is covalently cross-linked (Glycyl lysine isopeptide (Lys-Gly) (interchain with G-Cter in SUMO2)). Residues S177 and S189 each carry the phosphoserine modification. A disordered region spans residues 181-341; sequence MQEVQSSRSG…SGGYGGRSRY (161 aa). Residues 190 to 211 are compositionally biased toward gly residues; it reads GRGGNFGFGDSRGGGGNFGPGP. The residue at position 191 (R191) is an Asymmetric dimethylarginine; alternate. R191 carries the post-translational modification Dimethylated arginine; alternate. Omega-N-methylarginine; alternate is present on R191. S200 carries the phosphoserine modification. R201 bears the Asymmetric dimethylarginine; alternate mark. R201 carries the dimethylated arginine; alternate modification. The residue at position 201 (R201) is an Omega-N-methylarginine; alternate. S213 carries the post-translational modification Phosphoserine. Position 216 is an omega-N-methylarginine (R216). S219 and S224 each carry phosphoserine. Omega-N-methylarginine is present on R226. S247 carries the post-translational modification Phosphoserine. R254 bears the Asymmetric dimethylarginine; alternate mark. R254 is modified (omega-N-methylarginine; alternate). Residues 296 to 335 form a nuclear targeting sequence region; it reads QQPSNYGPMKSGNFGGSRNMGGPYGGGNYGPGGSGGSGGY. Positions 308 to 341 are enriched in gly residues; sequence NFGGSRNMGGPYGGGNYGPGGSGGSGGYGGRSRY. At S312 the chain carries Phosphoserine. The residue at position 313 (R313) is an Omega-N-methylarginine. Residue Y319 is modified to Phosphotyrosine. S329 and S332 each carry phosphoserine. Y335 carries the post-translational modification Phosphotyrosine. R338 is subject to Omega-N-methylarginine.

Identified in the spliceosome C complex. Identified in a IGF2BP1-dependent mRNP granule complex containing untranslated mRNAs. Interacts with IGF2BP1. Interacts with C9orf72. Interacts with DGCR8. Interacts with TARDBP. Interacts with CKAP5. Interacts with PPIA/CYPA. Interacts (via C-terminus) with FAM76B; the interaction results in retention of HNRNPA2B1 in the nucleus and inhibition of the NF-kappa-B-mediated inflammatory pathway. Interacts with NF-kappa-B inhibitors NFKBIA and NFKBIE; the interaction may be mediated by the RRM2 domain of HNRNPA2B1, and HNRNPA2B1 may interact simultaneously with FAM76B and either NFKBIA or NFKBIE to form a complex. Post-translationally, sumoylated in exosomes, promoting miRNAs-binding. In terms of processing, asymmetric dimethylation at Arg-254 constitutes the major methylation site. According to a report, methylation affects subcellular location and promotes nuclear localization. According to another report, methylation at Arg-254 does not influence nucleocytoplasmic shuttling.

The protein resides in the nucleus. It localises to the nucleoplasm. The protein localises to the cytoplasmic granule. It is found in the secreted. Its subcellular location is the extracellular exosome. Its function is as follows. Heterogeneous nuclear ribonucleoprotein (hnRNP) that associates with nascent pre-mRNAs, packaging them into hnRNP particles. The hnRNP particle arrangement on nascent hnRNA is non-random and sequence-dependent and serves to condense and stabilize the transcripts and minimize tangling and knotting. Packaging plays a role in various processes such as transcription, pre-mRNA processing, RNA nuclear export, subcellular location, mRNA translation and stability of mature mRNAs. Forms hnRNP particles with at least 20 other different hnRNP and heterogeneous nuclear RNA in the nucleus. Involved in transport of specific mRNAs to the cytoplasm in oligodendrocytes and neurons: acts by specifically recognizing and binding the A2RE (21 nucleotide hnRNP A2 response element) or the A2RE11 (derivative 11 nucleotide oligonucleotide) sequence motifs present on some mRNAs, and promotes their transport to the cytoplasm. Specifically binds single-stranded telomeric DNA sequences, protecting telomeric DNA repeat against endonuclease digestion. Also binds other RNA molecules, such as primary miRNA (pri-miRNAs): acts as a nuclear 'reader' of the N6-methyladenosine (m6A) mark by specifically recognizing and binding a subset of nuclear m6A-containing pri-miRNAs. Binding to m6A-containing pri-miRNAs promotes pri-miRNA processing by enhancing binding of DGCR8 to pri-miRNA transcripts. Involved in miRNA sorting into exosomes following sumoylation, possibly by binding (m6A)-containing pre-miRNAs. Acts as a regulator of efficiency of mRNA splicing, possibly by binding to m6A-containing pre-mRNAs. Plays a role in the splicing of pyruvate kinase PKM by binding repressively to sequences flanking PKM exon 9, inhibiting exon 9 inclusion and resulting in exon 10 inclusion and production of the PKM M2 isoform. The protein is Heterogeneous nuclear ribonucleoproteins A2/B1 (HNRNPA2B1) of Saguinus oedipus (Cotton-top tamarin).